The sequence spans 402 residues: Cysteine desulfurase NifS (402 aa).

Residues 72–73 (GT), Asn-151, Gln-179, and 199–201 (CGH) contribute to the pyridoxal 5'-phosphate site. Lys-202 carries the post-translational modification N6-(pyridoxal phosphate)lysine. Thr-237 serves as a coordination point for pyridoxal 5'-phosphate. The active-site Cysteine persulfide intermediate is the Cys-325. Cys-325 contributes to the [2Fe-2S] cluster binding site.

The protein belongs to the class-V pyridoxal-phosphate-dependent aminotransferase family. NifS/IscS subfamily. As to quaternary structure, homodimer. Requires pyridoxal 5'-phosphate as cofactor.

It catalyses the reaction (sulfur carrier)-H + L-cysteine = (sulfur carrier)-SH + L-alanine. With respect to regulation, inhibited by equimolar concentrations of p-chloromercuribenzoic acid, iodoacetamide or N-ethylmaleimide. Catalyzes the removal of elemental sulfur atoms from cysteine to produce alanine. Seems to participate in the biosynthesis of the nitrogenase metalloclusters by providing the inorganic sulfur required for the Fe-S core formation. This chain is Cysteine desulfurase NifS, found in Azotobacter vinelandii.